Here is a 199-residue protein sequence, read N- to C-terminus: Peptidyl-tRNA hydrolase (199 aa).

A tRNA-binding site is contributed by Tyr15. His20 functions as the Proton acceptor in the catalytic mechanism. TRNA is bound by residues Tyr66, Asn68, and Asn114.

It belongs to the PTH family. In terms of assembly, monomer.

The protein localises to the cytoplasm. The catalysed reaction is an N-acyl-L-alpha-aminoacyl-tRNA + H2O = an N-acyl-L-amino acid + a tRNA + H(+). Hydrolyzes ribosome-free peptidyl-tRNAs (with 1 or more amino acids incorporated), which drop off the ribosome during protein synthesis, or as a result of ribosome stalling. Its function is as follows. Catalyzes the release of premature peptidyl moieties from peptidyl-tRNA molecules trapped in stalled 50S ribosomal subunits, and thus maintains levels of free tRNAs and 50S ribosomes. In Burkholderia cenocepacia (strain HI2424), this protein is Peptidyl-tRNA hydrolase.